Reading from the N-terminus, the 257-residue chain is Ribonuclease HII (257 aa).

An RNase H type-2 domain is found at 72-257; sequence ERVAGIDEVG…FSPVQKILQA (186 aa). Residues aspartate 78, glutamate 79, and aspartate 170 each contribute to the a divalent metal cation site.

The protein belongs to the RNase HII family. Mn(2+) is required as a cofactor. Requires Mg(2+) as cofactor.

Its subcellular location is the cytoplasm. The enzyme catalyses Endonucleolytic cleavage to 5'-phosphomonoester.. Endonuclease that specifically degrades the RNA of RNA-DNA hybrids. This Levilactobacillus brevis (strain ATCC 367 / BCRC 12310 / CIP 105137 / JCM 1170 / LMG 11437 / NCIMB 947 / NCTC 947) (Lactobacillus brevis) protein is Ribonuclease HII.